The chain runs to 419 residues: RNA polymerase sigma factor sigD, chloroplastic (419 aa).

A chloroplast-targeting transit peptide spans 1-52 (MATTIPTTATATMCPSPPVPTISPLLRTTHQCQPSPSLSSPFSIKLSTALVC). Residues 207-220 (DLIQEGSIGLLRGA) carry the Polymerase core binding motif. Residues 377 to 396 (FEEIGKSLKLSRERVRQING) constitute a DNA-binding region (H-T-H motif).

The protein belongs to the sigma-70 factor family. Mostly expressed in leaves, and to a lesser extent in roots. Present in seedlings.

It localises to the plastid. The protein resides in the chloroplast. Sigma factors are initiation factors that promote the attachment of plastid-encoded RNA polymerase (PEP) to specific initiation sites and are then released. Regulates transcription of the ndhF gene which codes for a subunit of the plastid NDH [NAD(P)H dehydrogenase] complex. The chain is RNA polymerase sigma factor sigD, chloroplastic (SIGD) from Arabidopsis thaliana (Mouse-ear cress).